The sequence spans 247 residues: Disease resistance protein BAK6 (247 aa).

The N-terminal stretch at 1–24 (MAAVQFAAAGVLTGLLALATLASC) is a signal peptide. Residues Asn66, Asn104, and Asn113 are each glycosylated (N-linked (GlcNAc...) asparagine). LRR repeat units follow at residues 90 to 114 (LESLQYMELFGNSLNGSIPSTLGNL), 116 to 138 (DLISLDLWDNLLTGPIPTTLGSI), 139 to 161 (STLRYLRLYENNLTGPIPPSFGN), 162 to 186 (LTSLLELKLHRNSLSGSIPASLGNI), 188 to 210 (SLQFLKLNENMLTGTVPLEVLSL), and 213 to 237 (VGNLTELNIARNNLDGTVRSSGLRV). Asn150 and Asn161 each carry an N-linked (GlcNAc...) asparagine glycan. The N-linked (GlcNAc...) asparagine glycan is linked to Asn215.

Interacts with WAK17 isoform 1; the interaction is direct. As to quaternary structure, (Microbial infection) Interacts with G.zeae CFEM1; the interaction is direct. Interacts with G.zeae CFEMN1; the interaction is direct. Interacts with G.zeae CFEM5; the interaction is direct.

Functionally, contributes to activation of the hypersensitive response, a form of programmed cell death, upon fungal infection. May sense the presence of fungal material and relay the signal to WAK17 isoform 1. In Zea mays (Maize), this protein is Disease resistance protein BAK6.